The primary structure comprises 283 residues: Probable protein phosphatase 2C 58 (283 aa).

Residues Thr-35–Phe-282 enclose the PPM-type phosphatase domain. Asp-72, Gly-73, Asp-234, and Asp-273 together coordinate Mn(2+).

This sequence belongs to the PP2C family. The cofactor is Mg(2+). Mn(2+) serves as cofactor.

The enzyme catalyses O-phospho-L-seryl-[protein] + H2O = L-seryl-[protein] + phosphate. It carries out the reaction O-phospho-L-threonyl-[protein] + H2O = L-threonyl-[protein] + phosphate. The chain is Probable protein phosphatase 2C 58 from Arabidopsis thaliana (Mouse-ear cress).